A 250-amino-acid polypeptide reads, in one-letter code: 2,3-bisphosphoglycerate-dependent phosphoglycerate mutase (250 aa).

Substrate-binding positions include 10–17 (RHGESEWN), 23–24 (TG), R62, 89–92 (ERHY), K100, 116–117 (RR), and 185–186 (GN). The active-site Tele-phosphohistidine intermediate is the H11. The active-site Proton donor/acceptor is the E89.

The protein belongs to the phosphoglycerate mutase family. BPG-dependent PGAM subfamily. Homodimer.

It carries out the reaction (2R)-2-phosphoglycerate = (2R)-3-phosphoglycerate. Its pathway is carbohydrate degradation; glycolysis; pyruvate from D-glyceraldehyde 3-phosphate: step 3/5. In terms of biological role, catalyzes the interconversion of 2-phosphoglycerate and 3-phosphoglycerate. This is 2,3-bisphosphoglycerate-dependent phosphoglycerate mutase from Edwardsiella ictaluri (strain 93-146).